The following is a 369-amino-acid chain: Anhydro-N-acetylmuramic acid kinase (369 aa).

12–19 (GTSLDGVD) contributes to the ATP binding site.

Belongs to the anhydro-N-acetylmuramic acid kinase family.

It carries out the reaction 1,6-anhydro-N-acetyl-beta-muramate + ATP + H2O = N-acetyl-D-muramate 6-phosphate + ADP + H(+). Its pathway is amino-sugar metabolism; 1,6-anhydro-N-acetylmuramate degradation. It functions in the pathway cell wall biogenesis; peptidoglycan recycling. Functionally, catalyzes the specific phosphorylation of 1,6-anhydro-N-acetylmuramic acid (anhMurNAc) with the simultaneous cleavage of the 1,6-anhydro ring, generating MurNAc-6-P. Is required for the utilization of anhMurNAc either imported from the medium or derived from its own cell wall murein, and thus plays a role in cell wall recycling. The sequence is that of Anhydro-N-acetylmuramic acid kinase from Actinobacillus pleuropneumoniae serotype 5b (strain L20).